A 182-amino-acid polypeptide reads, in one-letter code: ATP synthase subunit delta (182 aa).

Belongs to the ATPase delta chain family. In terms of assembly, F-type ATPases have 2 components, F(1) - the catalytic core - and F(0) - the membrane proton channel. F(1) has five subunits: alpha(3), beta(3), gamma(1), delta(1), epsilon(1). F(0) has three main subunits: a(1), b(2) and c(10-14). The alpha and beta chains form an alternating ring which encloses part of the gamma chain. F(1) is attached to F(0) by a central stalk formed by the gamma and epsilon chains, while a peripheral stalk is formed by the delta and b chains.

It localises to the cell membrane. In terms of biological role, f(1)F(0) ATP synthase produces ATP from ADP in the presence of a proton or sodium gradient. F-type ATPases consist of two structural domains, F(1) containing the extramembraneous catalytic core and F(0) containing the membrane proton channel, linked together by a central stalk and a peripheral stalk. During catalysis, ATP synthesis in the catalytic domain of F(1) is coupled via a rotary mechanism of the central stalk subunits to proton translocation. Its function is as follows. This protein is part of the stalk that links CF(0) to CF(1). It either transmits conformational changes from CF(0) to CF(1) or is implicated in proton conduction. The sequence is that of ATP synthase subunit delta from Alkalihalophilus pseudofirmus (strain ATCC BAA-2126 / JCM 17055 / OF4) (Bacillus pseudofirmus).